We begin with the raw amino-acid sequence, 179 residues long: ATP synthase subunit delta (179 aa).

It belongs to the ATPase delta chain family. In terms of assembly, F-type ATPases have 2 components, F(1) - the catalytic core - and F(0) - the membrane proton channel. F(1) has five subunits: alpha(3), beta(3), gamma(1), delta(1), epsilon(1). F(0) has three main subunits: a(1), b(2) and c(10-14). The alpha and beta chains form an alternating ring which encloses part of the gamma chain. F(1) is attached to F(0) by a central stalk formed by the gamma and epsilon chains, while a peripheral stalk is formed by the delta and b chains.

It localises to the cell inner membrane. F(1)F(0) ATP synthase produces ATP from ADP in the presence of a proton or sodium gradient. F-type ATPases consist of two structural domains, F(1) containing the extramembraneous catalytic core and F(0) containing the membrane proton channel, linked together by a central stalk and a peripheral stalk. During catalysis, ATP synthesis in the catalytic domain of F(1) is coupled via a rotary mechanism of the central stalk subunits to proton translocation. Its function is as follows. This protein is part of the stalk that links CF(0) to CF(1). It either transmits conformational changes from CF(0) to CF(1) or is implicated in proton conduction. The polypeptide is ATP synthase subunit delta (Anaeromyxobacter sp. (strain K)).